We begin with the raw amino-acid sequence, 453 residues long: tRNA modification GTPase MnmE (453 aa).

Arg-22, Glu-79, and Lys-119 together coordinate (6S)-5-formyl-5,6,7,8-tetrahydrofolate. One can recognise a TrmE-type G domain in the interval 215-376 (GMKVVIAGRP…LKQHLKSLMG (162 aa)). Asn-225 serves as a coordination point for K(+). GTP is bound by residues 225–230 (NAGKSS), 244–250 (TEIAGTT), 269–272 (DTAG), and 334–337 (NKAD). Ser-229 is a binding site for Mg(2+). Thr-244, Ile-246, and Thr-249 together coordinate K(+). Mg(2+) is bound at residue Thr-250. Position 453 (Lys-453) interacts with (6S)-5-formyl-5,6,7,8-tetrahydrofolate.

This sequence belongs to the TRAFAC class TrmE-Era-EngA-EngB-Septin-like GTPase superfamily. TrmE GTPase family. In terms of assembly, homodimer. Heterotetramer of two MnmE and two MnmG subunits. K(+) serves as cofactor.

It is found in the cytoplasm. Exhibits a very high intrinsic GTPase hydrolysis rate. Involved in the addition of a carboxymethylaminomethyl (cmnm) group at the wobble position (U34) of certain tRNAs, forming tRNA-cmnm(5)s(2)U34. The chain is tRNA modification GTPase MnmE from Shewanella halifaxensis (strain HAW-EB4).